The chain runs to 143 residues: Transcriptional regulator MraZ (143 aa).

2 SpoVT-AbrB domains span residues Thr5–Glu47 and Thr76–Ala119.

Belongs to the MraZ family. In terms of assembly, forms oligomers.

It localises to the cytoplasm. It is found in the nucleoid. This Rhodococcus opacus (strain B4) protein is Transcriptional regulator MraZ.